Consider the following 344-residue polypeptide: Dihydroorotate dehydrogenase (quinone) (344 aa).

Residues 65 to 69 and Thr89 each bind FMN; that span reads AGLDK. Residue Lys69 participates in substrate binding. Residue 114-118 coordinates substrate; the sequence is NRMGF. The FMN site is built by Asn145 and Asn178. Asn178 provides a ligand contact to substrate. The Nucleophile role is filled by Ser181. Asn183 contributes to the substrate binding site. The FMN site is built by Lys223 and Thr251. Substrate is bound at residue 252 to 253; sequence NT. FMN-binding positions include Gly274, Gly303, and 324–325; that span reads YS.

This sequence belongs to the dihydroorotate dehydrogenase family. Type 2 subfamily. In terms of assembly, monomer. It depends on FMN as a cofactor.

Its subcellular location is the cell membrane. The enzyme catalyses (S)-dihydroorotate + a quinone = orotate + a quinol. It functions in the pathway pyrimidine metabolism; UMP biosynthesis via de novo pathway; orotate from (S)-dihydroorotate (quinone route): step 1/1. Its function is as follows. Catalyzes the conversion of dihydroorotate to orotate with quinone as electron acceptor. This chain is Dihydroorotate dehydrogenase (quinone), found in Cupriavidus pinatubonensis (strain JMP 134 / LMG 1197) (Cupriavidus necator (strain JMP 134)).